The following is a 777-amino-acid chain: Transcriptional regulator QRICH1 (777 aa).

Met1 bears the N-acetylmethionine mark. Residues 6-48 enclose the CARD domain; that stretch reads ENTISFEEYIRVKARSVPQHRMKEFLDSLASKGPEALQEFQQT. 2 disordered regions span residues 140–164 and 219–240; these read IQGQ…SPSQ and ALSP…VGTA. Phosphoserine is present on Ser346. Glycyl lysine isopeptide (Lys-Gly) (interchain with G-Cter in SUMO2) cross-links involve residues Lys354 and Lys359. Residues 420–440 are disordered; it reads QQQPQQQTAQEQTPPPQQQQQ. Phosphoserine is present on Ser465.

In terms of tissue distribution, expressed highly in prefrontal cortex, craniofacial area and near the limbs of mouse embryos. Expressed in heart, skeletal muscle, liver, kidney, lung, brain, spleen, intestine and growth plate in mice.

It is found in the nucleus. It localises to the cytoplasm. The protein resides in the cell membrane. In terms of biological role, transcriptional regulator that acts as a mediator of the integrated stress response (ISR) through transcriptional control of protein homeostasis under conditions of ER stress. Controls the outcome of the unfolded protein response (UPR), an ER-stress response pathway that either promotes recovery of ER homeostasis and cell survival, or triggers the terminal UPR which elicits programmed cell death when ER stress is prolonged and unresolved. ER stress induces QRICH1 translation by a ribosome translation re-initiation mechanism in response to EIF2S1/eIF-2-alpha phosphorylation, and stress-induced QRICH1 regulates a transcriptional program associated with protein translation, protein secretion-mediated proteotoxicity and cell death during the terminal UPR. May cooperate with ATF4 transcription factor signaling to regulate ER homeostasis which is critical for cell viability. Up-regulates CASP3/caspase-3 activity in epithelial cells under ER stress. Central regulator of proteotoxicity associated with ER stress-mediated inflammatory diseases in the intestines and liver. Involved in chondrocyte hypertrophy, a process required for normal longitudinal bone growth. This is Transcriptional regulator QRICH1 from Mus musculus (Mouse).